Consider the following 505-residue polypeptide: Enhancer of mRNA-decapping protein 3 (505 aa).

Positions 1–68 (MAADWLGSIV…ISELKILEIP (68 aa)) constitute a Sm domain. Residues 1-79 (MAADWLGSIV…ESLKYTSDQL (79 aa)) form a required for P-body targeting and interaction with DCP1A region. 2 disordered regions span residues 84-181 (TGFG…QLKA) and 219-243 (THER…TYRH). Polar residues-rich tracts occupy residues 91–113 (TRQQ…QNIP), 122–132 (EPSSTSPQPCS), and 155–177 (SLGS…TKNG). The tract at residues 186-293 (CFGDELEEIP…HKKLLCVAEK (108 aa)) is required for interaction with DDX6. Residues 187-223 (FGDELEEIPDTDFDFEGNLALFDKAAVFEEIDTHERR) form the DFDF domain. The region spanning 280-484 (SYVLHKKLLC…DIGIPQKVFR (205 aa)) is the YjeF N-terminal domain.

Belongs to the EDC3 family.

The protein localises to the cytoplasm. It localises to the P-body. Binds single-stranded RNA. Involved in the process of mRNA degradation and in the positive regulation of mRNA decapping. This is Enhancer of mRNA-decapping protein 3 (edc3) from Xenopus laevis (African clawed frog).